The primary structure comprises 477 residues: Dihydrolipoyl dehydrogenase (477 aa).

Residues 34 to 49, K58, and G122 contribute to the FAD site; that span reads EKYK…GGTC. A disulfide bond links C49 and C54. NAD(+)-binding positions include 188 to 192, E211, V245, and 276 to 279; these read GAGVI and AVGR. FAD contacts are provided by D319 and A327. H451 serves as the catalytic Proton acceptor.

It belongs to the class-I pyridine nucleotide-disulfide oxidoreductase family. As to quaternary structure, homodimer. FAD is required as a cofactor.

Its subcellular location is the cytoplasm. The enzyme catalyses N(6)-[(R)-dihydrolipoyl]-L-lysyl-[protein] + NAD(+) = N(6)-[(R)-lipoyl]-L-lysyl-[protein] + NADH + H(+). The pyruvate dehydrogenase complex catalyzes the overall conversion of pyruvate to acetyl-CoA and CO(2). It contains multiple copies of three enzymatic components: pyruvate dehydrogenase (E1), dihydrolipoamide acetyltransferase (E2) and lipoamide dehydrogenase (E3). This is Dihydrolipoyl dehydrogenase from Azotobacter vinelandii.